Here is a 257-residue protein sequence, read N- to C-terminus: Aspartate/glutamate leucyltransferase (257 aa).

Belongs to the R-transferase family. Bpt subfamily.

It localises to the cytoplasm. It carries out the reaction N-terminal L-glutamyl-[protein] + L-leucyl-tRNA(Leu) = N-terminal L-leucyl-L-glutamyl-[protein] + tRNA(Leu) + H(+). The catalysed reaction is N-terminal L-aspartyl-[protein] + L-leucyl-tRNA(Leu) = N-terminal L-leucyl-L-aspartyl-[protein] + tRNA(Leu) + H(+). Its function is as follows. Functions in the N-end rule pathway of protein degradation where it conjugates Leu from its aminoacyl-tRNA to the N-termini of proteins containing an N-terminal aspartate or glutamate. This is Aspartate/glutamate leucyltransferase from Nitrobacter winogradskyi (strain ATCC 25391 / DSM 10237 / CIP 104748 / NCIMB 11846 / Nb-255).